We begin with the raw amino-acid sequence, 136 residues long: Late embryogenesis abundant protein D-7 (136 aa).

2 disordered regions span residues 1 to 108 (MASH…AQGA) and 117 to 136 (GMADADEDEHNYPATVTRKD). A compositionally biased stretch (basic and acidic residues) spans 11–58 (GRAEGRAHEKGEQMKESMKEKAEAAKQKTMETAEAAKQKTMETAEAAK). LEA 11-mer repeat repeat units follow at residues 31-41 (KAEAAKQKTME), 42-52 (TAEAAKQKTME), 53-63 (TAEAAKQKTRG), 64-74 (AAETTNDKTKQ), and 75-85 (TAGAARGKAEE).

The protein belongs to the LEA type 4 family.

LEA proteins are late embryonic proteins abundant in higher plant seed embryos. There are two subsets of LEA proteins (5a and 5b), the first ones are expressed when the cotyledon weight reach 80 mg and the second set are expressed above 100 mg. The function of those proteins is not known. The sequence is that of Late embryogenesis abundant protein D-7 from Gossypium hirsutum (Upland cotton).